The chain runs to 81 residues: Costars family protein ABRACL (81 aa).

It belongs to the costars family.

This Xenopus tropicalis (Western clawed frog) protein is Costars family protein ABRACL (abracl).